The sequence spans 505 residues: Beta-glucosidase 18 (505 aa).

Positions 1–26 (MAGGSKTRIHASLVSTLLLLLPLASA) are cleaved as a signal peptide. Gln46 contacts a beta-D-glucoside. N-linked (GlcNAc...) asparagine glycosylation is present at Asn55. A beta-D-glucoside-binding positions include His148 and 193 to 194 (NE). Glu194 acts as the Proton donor in catalysis. Cys213 and Cys220 are oxidised to a cystine. Tyr337 contributes to the a beta-D-glucoside binding site. Cys345 and Cys350 are joined by a disulfide. A beta-D-glucoside-binding positions include Glu408, Trp457, 464-465 (EW), and Phe473. Glu408 acts as the Nucleophile in catalysis.

The protein belongs to the glycosyl hydrolase 1 family. Expressed in roots, leaves, flowers and pollen.

The catalysed reaction is Hydrolysis of terminal, non-reducing beta-D-glucosyl residues with release of beta-D-glucose.. Hydrolyzes glycosides and monolignol glucosides. Can hydrolyze para-nitrophenyl beta-D-glucopyranoside (pNPGlc) in vitro. Hydrolyzes para-nitrophenyl beta-D-fucopyranoside, para-nitrophenyl beta-D-galactopyranoside and para-nitrophenyl beta-D-xylopyranoside in vitro. Hydrolyzes the monolignol glucosides coniferin and syringin with high catalytic efficiencies. The sequence is that of Beta-glucosidase 18 from Oryza sativa subsp. japonica (Rice).